The following is a 451-amino-acid chain: UPF0210 protein lmo0534 (451 aa).

Belongs to the UPF0210 family. Homodimer.

The polypeptide is UPF0210 protein lmo0534 (Listeria monocytogenes serovar 1/2a (strain ATCC BAA-679 / EGD-e)).